A 366-amino-acid chain; its full sequence is Cobalt-precorrin-5B C(1)-methyltransferase (366 aa).

Belongs to the CbiD family.

The catalysed reaction is Co-precorrin-5B + S-adenosyl-L-methionine = Co-precorrin-6A + S-adenosyl-L-homocysteine. The protein operates within cofactor biosynthesis; adenosylcobalamin biosynthesis; cob(II)yrinate a,c-diamide from sirohydrochlorin (anaerobic route): step 6/10. In terms of biological role, catalyzes the methylation of C-1 in cobalt-precorrin-5B to form cobalt-precorrin-6A. In Thermoanaerobacter sp. (strain X514), this protein is Cobalt-precorrin-5B C(1)-methyltransferase.